Reading from the N-terminus, the 138-residue chain is Sec-independent protein translocase protein TatB (138 aa).

A helical membrane pass occupies residues 1 to 21 (MFDIGATELLVIAIVAILVIG). The tract at residues 74 to 138 (MAKHPADQMQ…EPRLPLEGRD (65 aa)) is disordered. Residues 83 to 97 (QPLDAPDPALSAAEA) are compositionally biased toward low complexity. The span at 98-138 (RAAHTEAAKPARAAEETQADRASADEHPAASEPRLPLEGRD) shows a compositional bias: basic and acidic residues.

Belongs to the TatB family. In terms of assembly, the Tat system comprises two distinct complexes: a TatABC complex, containing multiple copies of TatA, TatB and TatC subunits, and a separate TatA complex, containing only TatA subunits. Substrates initially bind to the TatABC complex, which probably triggers association of the separate TatA complex to form the active translocon.

The protein localises to the cell inner membrane. Part of the twin-arginine translocation (Tat) system that transports large folded proteins containing a characteristic twin-arginine motif in their signal peptide across membranes. Together with TatC, TatB is part of a receptor directly interacting with Tat signal peptides. TatB may form an oligomeric binding site that transiently accommodates folded Tat precursor proteins before their translocation. This chain is Sec-independent protein translocase protein TatB, found in Erythrobacter litoralis (strain HTCC2594).